Consider the following 64-residue polypeptide: Drosocin antimicrobial peptides (64 aa).

Positions 1–19 are cleaved as a signal peptide; sequence MKFTIVFLLLACVFAMAVA. Positions 20–21 are excised as a propeptide; that stretch reads TP. An O-linked (GalNAc...) serine glycan is attached at S28. O-linked (GalNAc...) threonine glycosylation is present at T32. Positions 32-40 are critical for inhibition of translation, possibly due to its role in mediating interactions with bacterial 23S rRNA and peptide chain release factors; it reads TSHPRPIRV.

This sequence belongs to the drosocin family. As to quaternary structure, associates with the bacterial 50S ribosomal complex, occupying the nascent peptide exit tunnel. Interacts with bacterial 23S rRNA; this interaction is direct. Interacts with bacterial rplV/50S ribosomal protein L22; this interaction is direct. Interacts with bacterial prfA/peptide chain release factor RF1; while associated with the bacterial 50S ribosomal complex, this interaction is direct and traps RF1 on the ribosome, inhibiting further translation. In terms of processing, proteolytically cleaved at a pair of basic residues corresponding to the RXK/RR optimal cleavage site for furin proteases to produce two distinct antibacterial peptides. Post-translationally, O-glycosylated. O-glycosylation may be required for efficient uptake by target bacterial cells. Monosaccharide modification of Thr-32 provides better antibacterial activity than disaccharide modification or no modification. O-glycosylation of Thr-32 is not essential for antimicrobial activity but enhances this activity by mediating interactions with the 23S rRNA and increasing the efficiency of translation inhibition.

It localises to the secreted. Functionally, antibacterial peptide with strong anti-Gram-negative bacteria activity. Significantly contributes to antibacterial activity against Enterobacter cloacae but not Providencia burhodogranariea. Inhibitor of bacterial translation machinery that targets translation termination in a prfA- or prfB-dependent manner. Binds within the nascent peptide exit tunnel of the bacterial large ribosomal subunit, potentially interfering with nascent chain translocation that occurs post-peptide bond formation. Binds prfA/RF1 (and potentially prfB/RF2), trapping it on the ribosome after release of the nascent polypeptide chain and preventing further translation. The resulting depletion of peptide chain release factors further disrupts bacterial translation by preventing ribosomal peptide chain release and inducing stop codon readthrough. Entry into target Escherichia coli cells requires the bacterial peptide antibiotic transporter sbmA. Its function is as follows. Peptide with significant antibacterial activity against Providencia burhodogranariea but not Enterobacter cloacae. This Drosophila simulans (Fruit fly) protein is Drosocin antimicrobial peptides (Dro).